The chain runs to 262 residues: Phycoerythrobilin:ferredoxin oxidoreductase (262 aa).

Belongs to the HY2 family.

It catalyses the reaction (3Z)-phycoerythrobilin + oxidized 2[4Fe-4S]-[ferredoxin] = 15,16-dihydrobiliverdin + reduced 2[4Fe-4S]-[ferredoxin] + 2 H(+). Functionally, catalyzes the two-electron reduction of the C2 and C3(1) diene system of 15,16-dihydrobiliverdin. In Synechococcus sp. (strain RCC307), this protein is Phycoerythrobilin:ferredoxin oxidoreductase.